The sequence spans 133 residues: Profilin-2 (133 aa).

It belongs to the profilin family. Occurs in many kinds of cells as a complex with monomeric actin in a 1:1 ratio.

The protein localises to the cytoplasm. Its subcellular location is the cytoskeleton. Functionally, binds to actin and affects the structure of the cytoskeleton. At high concentrations, profilin prevents the polymerization of actin, whereas it enhances it at low concentrations. By binding to PIP2, it inhibits the formation of IP3 and DG. The polypeptide is Profilin-2 (Artemisia vulgaris (Mugwort)).